The sequence spans 366 residues: tRNA/tmRNA (uracil-C(5))-methyltransferase (366 aa).

5 residues coordinate S-adenosyl-L-methionine: Q190, Y218, N223, E239, and D299. C324 functions as the Nucleophile in the catalytic mechanism. Residue E358 is the Proton acceptor of the active site.

It belongs to the class I-like SAM-binding methyltransferase superfamily. RNA M5U methyltransferase family. TrmA subfamily.

It catalyses the reaction uridine(54) in tRNA + S-adenosyl-L-methionine = 5-methyluridine(54) in tRNA + S-adenosyl-L-homocysteine + H(+). It carries out the reaction uridine(341) in tmRNA + S-adenosyl-L-methionine = 5-methyluridine(341) in tmRNA + S-adenosyl-L-homocysteine + H(+). Its function is as follows. Dual-specificity methyltransferase that catalyzes the formation of 5-methyluridine at position 54 (m5U54) in all tRNAs, and that of position 341 (m5U341) in tmRNA (transfer-mRNA). The chain is tRNA/tmRNA (uracil-C(5))-methyltransferase from Shigella flexneri serotype 5b (strain 8401).